Here is a 542-residue protein sequence, read N- to C-terminus: CTP synthase (542 aa).

The tract at residues 1-265 (MPRYIFITGG…DTEILRCFGI (265 aa)) is amidoligase domain. A CTP-binding site is contributed by Ser13. Ser13 is a UTP binding site. 14-19 (SLGKGL) provides a ligand contact to ATP. Position 54 (Tyr54) interacts with L-glutamine. Asp71 contributes to the ATP binding site. Mg(2+) is bound by residues Asp71 and Glu139. CTP is bound by residues 146 to 148 (DIE), 186 to 191 (KTKPTQ), and Lys222. UTP contacts are provided by residues 186 to 191 (KTKPTQ) and Lys222. ATP is bound at residue 238 to 240 (RDA). Residues 298-541 (YVGLLDAYKS…IAAALHQSRM (244 aa)) enclose the Glutamine amidotransferase type-1 domain. Gly353 lines the L-glutamine pocket. The Nucleophile; for glutamine hydrolysis role is filled by Cys380. Residues 381–384 (YGMQ), Glu404, and Arg469 contribute to the L-glutamine site. Residues His514 and Glu516 contribute to the active site.

This sequence belongs to the CTP synthase family. In terms of assembly, homotetramer.

The catalysed reaction is UTP + L-glutamine + ATP + H2O = CTP + L-glutamate + ADP + phosphate + 2 H(+). The enzyme catalyses L-glutamine + H2O = L-glutamate + NH4(+). It carries out the reaction UTP + NH4(+) + ATP = CTP + ADP + phosphate + 2 H(+). It participates in pyrimidine metabolism; CTP biosynthesis via de novo pathway; CTP from UDP: step 2/2. Its activity is regulated as follows. Allosterically activated by GTP, when glutamine is the substrate; GTP has no effect on the reaction when ammonia is the substrate. The allosteric effector GTP functions by stabilizing the protein conformation that binds the tetrahedral intermediate(s) formed during glutamine hydrolysis. Inhibited by the product CTP, via allosteric rather than competitive inhibition. Its function is as follows. Catalyzes the ATP-dependent amination of UTP to CTP with either L-glutamine or ammonia as the source of nitrogen. Regulates intracellular CTP levels through interactions with the four ribonucleotide triphosphates. The protein is CTP synthase of Maricaulis maris (strain MCS10) (Caulobacter maris).